Consider the following 124-residue polypeptide: Small ribosomal subunit protein bS6 (124 aa).

This sequence belongs to the bacterial ribosomal protein bS6 family.

Functionally, binds together with bS18 to 16S ribosomal RNA. This Campylobacter lari (strain RM2100 / D67 / ATCC BAA-1060) protein is Small ribosomal subunit protein bS6.